Here is a 214-residue protein sequence, read N- to C-terminus: RNA pyrophosphohydrolase (214 aa).

The region spanning 6 to 149 (GFRPNVGIIL…KRDVYQLALT (144 aa)) is the Nudix hydrolase domain. The Nudix box motif lies at 38–59 (GGIKYGETPMQAMYRELHEETG).

Belongs to the Nudix hydrolase family. RppH subfamily. A divalent metal cation serves as cofactor.

Functionally, accelerates the degradation of transcripts by removing pyrophosphate from the 5'-end of triphosphorylated RNA, leading to a more labile monophosphorylated state that can stimulate subsequent ribonuclease cleavage. The polypeptide is RNA pyrophosphohydrolase (Burkholderia cenocepacia (strain ATCC BAA-245 / DSM 16553 / LMG 16656 / NCTC 13227 / J2315 / CF5610) (Burkholderia cepacia (strain J2315))).